The following is a 601-amino-acid chain: 4-hydroxy-3-methylbut-2-en-1-yl diphosphate synthase (flavodoxin) (601 aa).

Residues cysteine 507, cysteine 510, cysteine 542, and glutamate 549 each contribute to the [4Fe-4S] cluster site.

The protein belongs to the IspG family. [4Fe-4S] cluster serves as cofactor.

It catalyses the reaction (2E)-4-hydroxy-3-methylbut-2-enyl diphosphate + oxidized [flavodoxin] + H2O + 2 H(+) = 2-C-methyl-D-erythritol 2,4-cyclic diphosphate + reduced [flavodoxin]. It participates in isoprenoid biosynthesis; isopentenyl diphosphate biosynthesis via DXP pathway; isopentenyl diphosphate from 1-deoxy-D-xylulose 5-phosphate: step 5/6. Functionally, converts 2C-methyl-D-erythritol 2,4-cyclodiphosphate (ME-2,4cPP) into 1-hydroxy-2-methyl-2-(E)-butenyl 4-diphosphate. This is 4-hydroxy-3-methylbut-2-en-1-yl diphosphate synthase (flavodoxin) from Chlamydia muridarum (strain MoPn / Nigg).